We begin with the raw amino-acid sequence, 258 residues long: Tetraspanin-15 (258 aa).

Residues 1–20 lie on the Cytoplasmic side of the membrane; that stretch reads MGALGDSAYGARGRLIKFSY. The chain crosses the membrane as a helical span at residues 21–41; that stretch reads IVTALISILFSISCICYGIWL. Topologically, residues 42 to 62 are extracellular; sequence LARRSQYAELVSPSLYVDVGR. The chain crosses the membrane as a helical span at residues 63 to 83; the sequence is ILVIISILSILNYLICFYAIF. Residues 84–93 lie on the Cytoplasmic side of the membrane; it reads KEMRCFVTSC. Residues 94–114 traverse the membrane as a helical segment; it reads AVASIVIAVMLIIGGCIGLNF. Over 115-223 the chain is Extracellular; sequence RDQLTHYTPL…STCYEPLQND (109 aa). The chain crosses the membrane as a helical span at residues 224-244; it reads LLHVMNVASWLCITNAIVQII. Residues 245–258 are Cytoplasmic-facing; that stretch reads PSVAGCWYSKLIRK.

This sequence belongs to the tetraspanin (TM4SF) family. As to quaternary structure, interacts with doxa-1 and bli-3. As to expression, expressed in the body wall (hyp7 hypodermal syncitium), pharynx and vulva. Expressed in a punctate pattern along the thick region of the hypodermis.

It is found in the membrane. In terms of biological role, plays a role in cuticle biogenesis. In complex with doxa-1 and the dual oxidase bli-3, promotes the generation of reactive oxygen species (ROS) and tyrosine cross-linking of collagen, thus stabilizing cuticular extracellular matrix. The chain is Tetraspanin-15 from Caenorhabditis elegans.